Consider the following 565-residue polypeptide: uncharacterized protein (565 aa).

Residues 1–19 (MRWLATFVALLIAISSVSA) form the signal peptide. A compositionally biased stretch (polar residues) spans 494 to 504 (TGAENVTNNSV). The disordered stretch occupies residues 494–525 (TGAENVTNNSVTATTPPAKASQQTPAPATPPV). A compositionally biased stretch (low complexity) spans 505–519 (TATTPPAKASQQTPA).

This is an uncharacterized protein from Archaeoglobus fulgidus (strain ATCC 49558 / DSM 4304 / JCM 9628 / NBRC 100126 / VC-16).